We begin with the raw amino-acid sequence, 484 residues long: tRNA-2-methylthio-N(6)-dimethylallyladenosine synthase (484 aa).

One can recognise an MTTase N-terminal domain in the interval 29-149; it reads GVFHIHTLGC…LPKLLDQNRA (121 aa). [4Fe-4S] cluster-binding residues include cysteine 38, cysteine 78, cysteine 112, cysteine 186, cysteine 190, and cysteine 193. Residues 172-401 form the Radical SAM core domain; the sequence is RASRISSWVA…VALQEQITEE (230 aa). Residues 404-474 form the TRAM domain; it reads ATFEGRDVEV…RHNLLADPDV (71 aa).

It belongs to the methylthiotransferase family. MiaB subfamily. In terms of assembly, monomer. [4Fe-4S] cluster is required as a cofactor.

It localises to the cytoplasm. It carries out the reaction N(6)-dimethylallyladenosine(37) in tRNA + (sulfur carrier)-SH + AH2 + 2 S-adenosyl-L-methionine = 2-methylsulfanyl-N(6)-dimethylallyladenosine(37) in tRNA + (sulfur carrier)-H + 5'-deoxyadenosine + L-methionine + A + S-adenosyl-L-homocysteine + 2 H(+). Functionally, catalyzes the methylthiolation of N6-(dimethylallyl)adenosine (i(6)A), leading to the formation of 2-methylthio-N6-(dimethylallyl)adenosine (ms(2)i(6)A) at position 37 in tRNAs that read codons beginning with uridine. In Bifidobacterium longum (strain DJO10A), this protein is tRNA-2-methylthio-N(6)-dimethylallyladenosine synthase.